Here is a 303-residue protein sequence, read N- to C-terminus: Catechol 1,2-dioxygenase (303 aa).

Fe cation-binding residues include tyrosine 156, tyrosine 191, histidine 215, and histidine 217.

In terms of assembly, homodimer. Requires Fe(3+) as cofactor.

It catalyses the reaction catechol + O2 = cis,cis-muconate + 2 H(+). It functions in the pathway aromatic compound metabolism; beta-ketoadipate pathway; 5-oxo-4,5-dihydro-2-furylacetate from catechol: step 1/3. Its activity is regulated as follows. Inhibited by Ag(+), Cu(+), Hg(2+) and Pb(2+). Can cleave 4-methylcatechol at lower rates than catechol, but has no activity with 3-methylcatechol, 4-chlorocatechol, 4-carboxycatechol or hydroxyquinol. The protein is Catechol 1,2-dioxygenase (HQD2) of Candida albicans (strain SC5314 / ATCC MYA-2876) (Yeast).